We begin with the raw amino-acid sequence, 256 residues long: Imidazole glycerol phosphate synthase subunit HisF (256 aa).

Active-site residues include Asp11 and Asp130.

It belongs to the HisA/HisF family. In terms of assembly, heterodimer of HisH and HisF.

The protein localises to the cytoplasm. The enzyme catalyses 5-[(5-phospho-1-deoxy-D-ribulos-1-ylimino)methylamino]-1-(5-phospho-beta-D-ribosyl)imidazole-4-carboxamide + L-glutamine = D-erythro-1-(imidazol-4-yl)glycerol 3-phosphate + 5-amino-1-(5-phospho-beta-D-ribosyl)imidazole-4-carboxamide + L-glutamate + H(+). It participates in amino-acid biosynthesis; L-histidine biosynthesis; L-histidine from 5-phospho-alpha-D-ribose 1-diphosphate: step 5/9. Functionally, IGPS catalyzes the conversion of PRFAR and glutamine to IGP, AICAR and glutamate. The HisF subunit catalyzes the cyclization activity that produces IGP and AICAR from PRFAR using the ammonia provided by the HisH subunit. In Prochlorococcus marinus (strain NATL2A), this protein is Imidazole glycerol phosphate synthase subunit HisF.